Here is a 161-residue protein sequence, read N- to C-terminus: Shikimate kinase (161 aa).

10-15 is a binding site for ATP; sequence GAGKTT. Position 14 (Thr-14) interacts with Mg(2+). Substrate-binding residues include Asp-28, Arg-52, and Gly-74. ATP is bound at residue Arg-114. Arg-132 lines the substrate pocket.

It belongs to the shikimate kinase family. As to quaternary structure, monomer. The cofactor is Mg(2+).

The protein resides in the cytoplasm. The catalysed reaction is shikimate + ATP = 3-phosphoshikimate + ADP + H(+). The protein operates within metabolic intermediate biosynthesis; chorismate biosynthesis; chorismate from D-erythrose 4-phosphate and phosphoenolpyruvate: step 5/7. Its function is as follows. Catalyzes the specific phosphorylation of the 3-hydroxyl group of shikimic acid using ATP as a cosubstrate. This is Shikimate kinase from Streptococcus gordonii (strain Challis / ATCC 35105 / BCRC 15272 / CH1 / DL1 / V288).